The sequence spans 244 residues: Thiol S-methyltransferase TMT1B (244 aa).

Residues M1–A23 form the signal peptide.

Belongs to the methyltransferase superfamily. In terms of tissue distribution, expressed in the liver.

It is found in the endoplasmic reticulum membrane. The protein localises to the lipid droplet. The protein resides in the microsome. It localises to the cytoplasm. Its subcellular location is the cytosol. The enzyme catalyses a thiol + S-adenosyl-L-methionine = a methyl thioether + S-adenosyl-L-homocysteine + H(+). Its function is as follows. Thiol S-methyltransferase that catalyzes the transfer of a methyl group from S-adenosyl-L-methionine to alkyl and phenolic thiol-containing acceptor substrates. Together with TMT1B accounts for most of S-thiol methylation activity in the endoplasmic reticulum of hepatocytes. Selectively methylates S-centered nucleophiles from metabolites such as hydrogen sulfide and dithiothreitol. The chain is Thiol S-methyltransferase TMT1B from Homo sapiens (Human).